Here is a 337-residue protein sequence, read N- to C-terminus: MDSNPGADQAVAPIVEQALRTAMSAGWEVRGTTSPNPPVGAVIISTSGEIVGTGATQPVGGVHAEVQALADAAGKTEGATAVVTLEPCRHTGRTGPCTQALIEAGIKDVLFLHSDPNPSAGGGEQVLVDAGINVVQLPSPEGVPDALIPWLKSVQLRRPHVTLKFAQTIDGFTAAADGTSQWITGEMARDYVHADREHRDAIIIGTGTALIDNPSLTARYPDGTQREHQPRRVVIGRRNIADAGDAASNLNRLGFEQYATIDEALAELYATGARDVLVEGGAGLASGFANQGLVDWLQVYQAPLLLGEGISVLAHPLTNTLKGASALCPRAASGAGR.

The segment at 1-157 (MDSNPGADQA…IPWLKSVQLR (157 aa)) is deaminase. A CMP/dCMP-type deaminase domain is found at 13-124 (PIVEQALRTA…DPNPSAGGGE (112 aa)). A Zn(2+)-binding site is contributed by histidine 63. The Proton donor role is filled by glutamate 65. Residues cysteine 88 and cysteine 97 each contribute to the Zn(2+) site. Residues 158-337 (RPHVTLKFAQ…CPRAASGAGR (180 aa)) are reductase. NADP(+) contacts are provided by residues alanine 166 and 173–176 (TAAA). Position 180 (serine 180) interacts with substrate. Residue tryptophan 182 participates in NADP(+) binding. Substrate is bound at residue arginine 196. Positions 208 and 212 each coordinate NADP(+). Residues leucine 216, arginine 219, and glutamate 279 each coordinate substrate. 281–287 (GAGLASG) contributes to the NADP(+) binding site.

It in the N-terminal section; belongs to the cytidine and deoxycytidylate deaminase family. This sequence in the C-terminal section; belongs to the HTP reductase family. The cofactor is Zn(2+).

It catalyses the reaction 2,5-diamino-6-hydroxy-4-(5-phosphoribosylamino)-pyrimidine + H2O + H(+) = 5-amino-6-(5-phospho-D-ribosylamino)uracil + NH4(+). It carries out the reaction 5-amino-6-(5-phospho-D-ribitylamino)uracil + NADP(+) = 5-amino-6-(5-phospho-D-ribosylamino)uracil + NADPH + H(+). It participates in cofactor biosynthesis; riboflavin biosynthesis; 5-amino-6-(D-ribitylamino)uracil from GTP: step 2/4. It functions in the pathway cofactor biosynthesis; riboflavin biosynthesis; 5-amino-6-(D-ribitylamino)uracil from GTP: step 3/4. In terms of biological role, converts 2,5-diamino-6-(ribosylamino)-4(3h)-pyrimidinone 5'-phosphate into 5-amino-6-(ribosylamino)-2,4(1h,3h)-pyrimidinedione 5'-phosphate. This Corynebacterium ammoniagenes (Brevibacterium ammoniagenes) protein is Riboflavin biosynthesis protein RibD (ribD).